The following is a 115-amino-acid chain: Non-specific lipid-transfer protein (115 aa).

Positions 1-24 are cleaved as a signal peptide; the sequence is MASSAVTKLALVVALCMAVSVAHA. 4 cysteine pairs are disulfide-bonded: Cys-27–Cys-74, Cys-37–Cys-51, Cys-52–Cys-97, and Cys-72–Cys-111.

The protein belongs to the plant LTP family.

Its function is as follows. Plant non-specific lipid-transfer proteins transfer phospholipids as well as galactolipids across membranes. May play a role in wax or cutin deposition in the cell walls of expanding epidermal cells and certain secretory tissues. This is Non-specific lipid-transfer protein (MALD3) from Malus domestica (Apple).